A 1220-amino-acid chain; its full sequence is MIDVNKFESMQIGLASPDKIRSWSYGEVKKPETINYRTLKPERDGLFDERIFGPTKDWECACGKYKRIRYKGIVCDRCGVEVTRSKVRRERMGHIELAAPVTHIWYFKGIPSRMGLVLDMSPRSLEEIIYFASYVVIDPGDTPMEKKQLLTEREYREKREEYGQTFNAKMGAEAIKELLQDVELDKEVAELKEDLKSAQGQKRTRAIRRLDILDAFKESGNDPAWMVMDTIPVIPPDLRPMVQLEGGRFATSDLNDLYRRVINRNNRLKRLLDLNAPSIIVQNEKRMLQEAVDALIDNGRRGRPVTGPGNRPLKSLSHMLKGKQGRFRQNLLGKRVDYSGRSVIDVGPWLKFYQCGVPREMALELFKPFVMRELVKRDMASNIKNARRKIDRQDDDVWDVLEDVIKERPVLLNRAPTLHRLGIQAFEPVLVDGKSIRLHPLVCEAYNADFDGDQMAIHVPLSDEAMAEARMLMLAAHHILAPKDGKPIVTPSQDVVLGNYYLTMEQKGREGEGMIFKDTNEVLMALQNGYVHLHSRIGIATNSFTDKPFTDDQKQKIMVTSVGKAIFNEIMPKDFPYLNEPTQDNIVNGVPDKYFIDKGEDINDYLEDAPLIDPFKKGFLSDIIAQVFKVYKVQRTSDLLDDMKTLGYTQSTNSGLTVGIADITNLKEKPEIVEAAHKKVATVSKQFRRGLITDEERHDRVIQIWNDAKDDIQQKLVDSFDPNNPISMMSDSGARGNISNFTQLAGMRGLMAAPNGGMMEVPVISNFREGLSVMEMFMSTHGARKGMTDTALKTADSGYLTRRLVDVAQDVIVREEDCGTDRGLVVSAIREGNEMIEPLYDRLVGRFTMKDVLDPKSGEVLVKRNTLMDEDTAQMIVDAGVESVTIRSVFTCNTKHGVCQKCYGRNMATGEQVEVGEAVGTVAAQSIGEPGTQLTMRNFHTGGVAGGEDITQGLPRVQEIFEARNPKGEAVITEVTGEITAIDENPAEHTREITVKGETDTRTYSVPYASSVAVAEGDHINRGERLTGGSIDPKQLIKVRDVMATENYLLSEVQKVYRMQGVDIGDKHVEVMVRQMLRKIRVMDPGDTNILPGTLLDIADFKEKNTQAIISGGIPATGRPVLLGITKASLETNSFLSAASFQETTRVLTDASIRGKNDPLIGLKENVIIGKIIPAGTGMATYRHEEPKSVGTVSDSVYSISDIEKQMKAKDGQQGDTDKK.

The Zn(2+) site is built by Cys-60, Cys-62, Cys-75, and Cys-78. The Mg(2+) site is built by Asp-449, Asp-451, and Asp-453. The Zn(2+) site is built by Cys-818, Cys-892, Cys-899, and Cys-902.

The protein belongs to the RNA polymerase beta' chain family. As to quaternary structure, the RNAP catalytic core consists of 2 alpha, 1 beta, 1 beta' and 1 omega subunit. When a sigma factor is associated with the core the holoenzyme is formed, which can initiate transcription. Mg(2+) is required as a cofactor. It depends on Zn(2+) as a cofactor.

It catalyses the reaction RNA(n) + a ribonucleoside 5'-triphosphate = RNA(n+1) + diphosphate. In terms of biological role, DNA-dependent RNA polymerase catalyzes the transcription of DNA into RNA using the four ribonucleoside triphosphates as substrates. This Lacticaseibacillus paracasei (strain ATCC 334 / BCRC 17002 / CCUG 31169 / CIP 107868 / KCTC 3260 / NRRL B-441) (Lactobacillus paracasei) protein is DNA-directed RNA polymerase subunit beta'.